Consider the following 340-residue polypeptide: Ferrochelatase (340 aa).

Fe cation-binding residues include His189 and Glu292.

It belongs to the ferrochelatase family.

It is found in the cytoplasm. It catalyses the reaction heme b + 2 H(+) = protoporphyrin IX + Fe(2+). It participates in porphyrin-containing compound metabolism; protoheme biosynthesis; protoheme from protoporphyrin-IX: step 1/1. Functionally, catalyzes the ferrous insertion into protoporphyrin IX. The polypeptide is Ferrochelatase (Pseudomonas aeruginosa (strain LESB58)).